Reading from the N-terminus, the 418-residue chain is Protein-lysine N-trimethyltransferase SMYD5 (418 aa).

In terms of domain architecture, SET spans 21–352 (VSVEVRFVSS…PGEEICISYL (332 aa)). The MYND-type zinc-finger motif lies at 98-136 (PELCTVRKDLHQNCPHCQVMYCSAECRLAATEQYHQVLC). Tyr351 is an S-adenosyl-L-methionine binding site. The interval 385–418 (ADEPNVTSEEEEEEEEEEEGEPEDAELGDEMTDV) is disordered.

Belongs to the class V-like SAM-binding methyltransferase superfamily. In terms of assembly, interacts with the N-CoR complex. Interacts with EHMT2 and CBX5. Ubiquitinated and degradaed by the proteasome in response to mild hypothermia (32 degrees Celsius), relieving repression of the SP1 gene.

It is found in the cytoplasm. It catalyses the reaction L-lysyl-[protein] + 3 S-adenosyl-L-methionine = N(6),N(6),N(6)-trimethyl-L-lysyl-[protein] + 3 S-adenosyl-L-homocysteine + 3 H(+). The enzyme catalyses L-lysyl(20)-[histone H4] + 3 S-adenosyl-L-methionine = N(6),N(6),N(6)-trimethyl-L-lysyl(20)-[histone H4] + 3 S-adenosyl-L-homocysteine + 3 H(+). It carries out the reaction L-lysyl(36)-[histone H3] + 3 S-adenosyl-L-methionine = N(6),N(6),N(6)-trimethyl-L-lysyl(36)-[histone H3] + 3 S-adenosyl-L-homocysteine + 3 H(+). Protein-lysine N-trimethyltransferase that specifically catalyzes trimethylation of 'Lys-22' of the RPL40/eL40 subunit of the 60S ribosome, thereby promoting translation elongation and protein synthesis. May also act as a histone methyltransferase in the context of histone octamers, but not on nucleosome substrates: trimethylates 'Lys-36' of histone H3 and 'Lys-20' of histone H4 to form H3K36me3 and H4K20me3, respectively. The histone methyltransferase activity, which is independent of its SET domain, is however unsure in vivo. In association with the NCoR corepressor complex, involved in the repression of toll-like receptor 4 (TLR4)-target inflammatory genes in macrophages, possibly by catalyzing the formation of H4K20me3 at the gene promoters. Plays an important role in embryonic stem (ES) cell self-renewal and differentiation. Maintains genome stability of ES cells during differentiation through regulation of heterochromatin formation and repression of endogenous repetitive DNA elements by promoting H4K20me3 marks. Acts as a regulator of the hypothermia response: its degradation in response to mild hypothermia relieves the formation of H3K36me3 at gene promoters, allowing expression of the neuroprotective gene SP1. In Homo sapiens (Human), this protein is Protein-lysine N-trimethyltransferase SMYD5.